We begin with the raw amino-acid sequence, 196 residues long: Purpurin (196 aa).

An N-terminal signal peptide occupies residues 1–21 (MKYAQYVFLASIFSAVEYSLA). Intrachain disulfides connect Cys24/Cys182, Cys90/Cys196, and Cys142/Cys151.

The protein belongs to the calycin superfamily. Lipocalin family.

The protein localises to the secreted. It localises to the extracellular space. The protein resides in the extracellular matrix. Its subcellular location is the interphotoreceptor matrix. In terms of biological role, may be involved in the transport of retinol between the photoreceptors and the pigmented epithelium. This Gallus gallus (Chicken) protein is Purpurin.